The primary structure comprises 302 residues: N-acetylmuramic acid 6-phosphate etherase (302 aa).

In terms of domain architecture, SIS spans 55-218 (AYPKFDQGGR…STGIMVKSGK (164 aa)). Residue glutamate 83 is the Proton donor of the active site. The active site involves glutamate 114.

Belongs to the GCKR-like family. MurNAc-6-P etherase subfamily. Homodimer.

The enzyme catalyses N-acetyl-D-muramate 6-phosphate + H2O = N-acetyl-D-glucosamine 6-phosphate + (R)-lactate. It participates in amino-sugar metabolism; N-acetylmuramate degradation. Specifically catalyzes the cleavage of the D-lactyl ether substituent of MurNAc 6-phosphate, producing GlcNAc 6-phosphate and D-lactate. The chain is N-acetylmuramic acid 6-phosphate etherase from Levilactobacillus brevis (strain ATCC 367 / BCRC 12310 / CIP 105137 / JCM 1170 / LMG 11437 / NCIMB 947 / NCTC 947) (Lactobacillus brevis).